The primary structure comprises 520 residues: 3-phosphoshikimate 1-carboxyvinyltransferase, chloroplastic (520 aa).

Residues 1–76 (MAQISSMAQG…RISASVATAE (76 aa)) constitute a chloroplast transit peptide. Residues Lys-99, Ser-100, and Arg-104 each coordinate 3-phosphoshikimate. A phosphoenolpyruvate-binding site is contributed by Lys-99. Phosphoenolpyruvate-binding residues include Gly-177 and Arg-207. Positions 254, 255, 256, 282, 407, and 434 each coordinate 3-phosphoshikimate. Gln-256 contributes to the phosphoenolpyruvate binding site. The active-site Proton acceptor is the Asp-407. Phosphoenolpyruvate-binding residues include Arg-438, Arg-480, and Lys-505.

Belongs to the EPSP synthase family.

It is found in the plastid. The protein localises to the chloroplast. It carries out the reaction 3-phosphoshikimate + phosphoenolpyruvate = 5-O-(1-carboxyvinyl)-3-phosphoshikimate + phosphate. It participates in metabolic intermediate biosynthesis; chorismate biosynthesis; chorismate from D-erythrose 4-phosphate and phosphoenolpyruvate: step 6/7. Its function is as follows. Catalyzes the transfer of the enolpyruvyl moiety of phosphoenolpyruvate (PEP) to the 5-hydroxyl of shikimate-3-phosphate (S3P) to produce enolpyruvyl shikimate-3-phosphate and inorganic phosphate. The sequence is that of 3-phosphoshikimate 1-carboxyvinyltransferase, chloroplastic from Solanum lycopersicum (Tomato).